The following is a 430-amino-acid chain: Adenylosuccinate synthetase (430 aa).

GTP-binding positions include 12 to 18 and 40 to 42; these read GDEGKGK and GHT. Asp13 serves as the catalytic Proton acceptor. Positions 13 and 40 each coordinate Mg(2+). Residues 13–16, 38–41, Thr128, Arg142, Gln223, Thr238, and Arg302 contribute to the IMP site; these read DEGK and NAGH. His41 (proton donor) is an active-site residue. Position 298-304 (298-304) interacts with substrate; it reads TTTGRPR. GTP is bound by residues Arg304, 330–332, and 412–414; these read SID and SVG.

The protein belongs to the adenylosuccinate synthetase family. As to quaternary structure, homodimer. The cofactor is Mg(2+).

Its subcellular location is the cytoplasm. It carries out the reaction IMP + L-aspartate + GTP = N(6)-(1,2-dicarboxyethyl)-AMP + GDP + phosphate + 2 H(+). Its pathway is purine metabolism; AMP biosynthesis via de novo pathway; AMP from IMP: step 1/2. Its function is as follows. Plays an important role in the de novo pathway of purine nucleotide biosynthesis. Catalyzes the first committed step in the biosynthesis of AMP from IMP. The polypeptide is Adenylosuccinate synthetase (Streptococcus pyogenes serotype M2 (strain MGAS10270)).